The primary structure comprises 122 residues: T cell receptor gamma variable 9 (122 aa).

The first 20 residues, 1–20 (MLSLLHTSTLAVLGALCVYG), serve as a signal peptide directing secretion. One can recognise an Ig-like domain in the interval 27–122 (PQISSTKTLS…ATYYCALWEV (96 aa)). A disulfide bridge connects residues cysteine 43 and cysteine 117.

As to quaternary structure, gamma-delta TR is a heterodimer composed of a gamma and delta chain; disulfide-linked. The gamma-delta TR is associated with the transmembrane signaling CD3 coreceptor proteins following the stoichiometry: a single gamma-delta TR heterodimer associates with one CD3D-CD3E heterodimer, one CD3G-CD3E heterodimer and one CD247 homodimer forming a stable octameric structure. Upon activation, gamma-delta TR complex associates with FCER1G to initiate intracellular signaling.

The protein resides in the cell membrane. Its function is as follows. V region of the variable domain of T cell receptor (TR) gamma chain that participates in the antigen recognition. Gamma-delta TRs recognize a variety of self and foreign non-peptide antigens frequently expressed at the epithelial boundaries between the host and external environment, including endogenous lipids presented by MH-like protein CD1D and phosphoantigens presented by butyrophilin-like molecule BTN3A1. Upon antigen recognition induces rapid, innate-like immune responses involved in pathogen clearance and tissue repair. Binding of gamma-delta TR complex to antigen triggers phosphorylation of immunoreceptor tyrosine-based activation motifs (ITAMs) in the CD3 chains by the LCK and FYN kinases, allowing the recruitment, phosphorylation, and activation of ZAP70 that facilitates phosphorylation of the scaffolding proteins LCP2 and LAT. This lead to the formation of a supramolecular signalosome that recruits the phospholipase PLCG1, resulting in calcium mobilization and ERK activation, ultimately leading to T cell expansion and differentiation into effector cells. Gamma-delta TRs are produced through somatic rearrangement of a limited repertoire of variable (V), diversity (D), and joining (J) genes. The potential diversity of gamma-delta TRs is conferred by the unique ability to rearrange (D) genes in tandem and to utilize all three reading frames. The combinatorial diversity is considerably increased by the sequence exonuclease trimming and random nucleotide (N) region additions which occur during the V-(D)-J rearrangements. The polypeptide is T cell receptor gamma variable 9 (Homo sapiens (Human)).